The sequence spans 209 residues: Kynurenine formamidase (209 aa).

A substrate-binding site is contributed by W19. H49, H53, and D55 together coordinate Zn(2+). H59 functions as the Proton donor/acceptor in the catalytic mechanism. Zn(2+) contacts are provided by H160 and E172.

This sequence belongs to the Cyclase 1 superfamily. KynB family. Homodimer. Zn(2+) is required as a cofactor.

The catalysed reaction is N-formyl-L-kynurenine + H2O = L-kynurenine + formate + H(+). The protein operates within amino-acid degradation; L-tryptophan degradation via kynurenine pathway; L-kynurenine from L-tryptophan: step 2/2. Its function is as follows. Catalyzes the hydrolysis of N-formyl-L-kynurenine to L-kynurenine, the second step in the kynurenine pathway of tryptophan degradation. This is Kynurenine formamidase from Geobacillus thermodenitrificans (strain NG80-2).